The chain runs to 308 residues: S-adenosylmethionine-dependent nucleotide dehydratase (308 aa).

Positions 7–253 (SIQELVINFH…WQSYLMINPE (247 aa)) constitute a Radical SAM core domain. Residues Cys-21, Cys-25, and Cys-28 each coordinate [4Fe-4S] cluster.

Belongs to the radical SAM superfamily. Viperin family. Requires [4Fe-4S] cluster as cofactor.

The enzyme catalyses CTP + AH2 + S-adenosyl-L-methionine = 3'-deoxy-3',4'-didehydro-CTP + 5'-deoxyadenosine + L-methionine + A + H2O + H(+). It carries out the reaction GTP + AH2 + S-adenosyl-L-methionine = 3'-deoxy-3',4'-didehydro-GTP + 5'-deoxyadenosine + L-methionine + A + H2O + H(+). The catalysed reaction is UTP + AH2 + S-adenosyl-L-methionine = 3'-deoxy-3',4'-didehydro-UTP + 5'-deoxyadenosine + L-methionine + A + H2O + H(+). Expression of pVip58 in E.coli (strain MG1655) confers resistance to phages lambda, P1 and T7; delays culture collapse upon infection with T7. Catalyzes the conversion of cytidine triphosphate (CTP) to 3'-deoxy-3',4'-didehydro-CTP (ddhCTP), guanosine triphosphate (GTP) to 3'-deoxy-3',4'-didehydro-GTP (ddhGTP) and uridine triphosphate (UTP) to 3'-deoxy-3',4'-didehydro-UTP (ddhUTP), probably via a SAM-dependent radical mechanism. The modified nucleotide represses transcription from T7 RNA polymerase-directed genes (possibly by acting as chain terminators), strongly suggesting these nucleotides block viral polymerase transcription. The polypeptide is S-adenosylmethionine-dependent nucleotide dehydratase (Pseudoalteromonas ulvae).